The following is a 173-amino-acid chain: ATP-dependent protease subunit HslV (173 aa).

The active site involves Thr-2. Residues Gly-158, Asp-161, and Ser-164 each coordinate Na(+).

This sequence belongs to the peptidase T1B family. HslV subfamily. A double ring-shaped homohexamer of HslV is capped on each side by a ring-shaped HslU homohexamer. The assembly of the HslU/HslV complex is dependent on binding of ATP.

It localises to the cytoplasm. It carries out the reaction ATP-dependent cleavage of peptide bonds with broad specificity.. Allosterically activated by HslU binding. Its function is as follows. Protease subunit of a proteasome-like degradation complex believed to be a general protein degrading machinery. This is ATP-dependent protease subunit HslV from Glaesserella parasuis serovar 5 (strain SH0165) (Haemophilus parasuis).